The primary structure comprises 550 residues: Dihydroxy-acid dehydratase (550 aa).

Aspartate 78 lines the Mg(2+) pocket. Cysteine 119 is a [2Fe-2S] cluster binding site. Mg(2+)-binding residues include aspartate 120 and lysine 121. An N6-carboxylysine modification is found at lysine 121. Residue cysteine 192 participates in [2Fe-2S] cluster binding. Glutamate 440 contacts Mg(2+). Serine 466 functions as the Proton acceptor in the catalytic mechanism.

The protein belongs to the IlvD/Edd family. In terms of assembly, homodimer. [2Fe-2S] cluster serves as cofactor. The cofactor is Mg(2+).

It catalyses the reaction (2R)-2,3-dihydroxy-3-methylbutanoate = 3-methyl-2-oxobutanoate + H2O. It carries out the reaction (2R,3R)-2,3-dihydroxy-3-methylpentanoate = (S)-3-methyl-2-oxopentanoate + H2O. It functions in the pathway amino-acid biosynthesis; L-isoleucine biosynthesis; L-isoleucine from 2-oxobutanoate: step 3/4. Its pathway is amino-acid biosynthesis; L-valine biosynthesis; L-valine from pyruvate: step 3/4. Its function is as follows. Functions in the biosynthesis of branched-chain amino acids. Catalyzes the dehydration of (2R,3R)-2,3-dihydroxy-3-methylpentanoate (2,3-dihydroxy-3-methylvalerate) into 2-oxo-3-methylpentanoate (2-oxo-3-methylvalerate) and of (2R)-2,3-dihydroxy-3-methylbutanoate (2,3-dihydroxyisovalerate) into 2-oxo-3-methylbutanoate (2-oxoisovalerate), the penultimate precursor to L-isoleucine and L-valine, respectively. In Thermodesulfovibrio yellowstonii (strain ATCC 51303 / DSM 11347 / YP87), this protein is Dihydroxy-acid dehydratase.